The chain runs to 1150 residues: Voltage-dependent calcium channel subunit alpha-2/delta-2 (1150 aa).

The N-terminal stretch at 1–18 (MAVPARTCGASRPGPART) is a signal peptide. The disordered stretch occupies residues 1–41 (MAVPARTCGASRPGPARTARPWPGCGPHPGPGTRRPTSGPP). Residues 19 to 1113 (ARPWPGCGPH…TEDTSDCGRG (1095 aa)) are Extracellular-facing. In terms of domain architecture, VWFA spans 291–469 (DMVIIVDVSG…INTQEYLDVL (179 aa)). The a divalent metal cation site is built by aspartate 297, serine 299, and serine 301. An MIDAS-like motif motif is present at residues 297-301 (DVSGS). 6 N-linked (GlcNAc...) asparagine glycosylation sites follow: asparagine 386, asparagine 418, asparagine 507, asparagine 540, asparagine 624, and asparagine 861. Cysteine 443 and cysteine 1098 form a disulfide bridge. The Cache domain maps to 485-574 (WTNVYEDALG…KPQTTNFREP (90 aa)). Residues 1114–1134 (ASFPPSLGVLVSLQLLLLLGL) form a helical membrane-spanning segment. At 1135–1150 (PPRPQPQVLVHASRRL) the chain is on the cytoplasmic side.

The protein belongs to the calcium channel subunit alpha-2/delta family. In terms of assembly, dimer formed of alpha-2-2 and delta-2 chains; disulfide-linked. Voltage-dependent calcium channels are multisubunit complexes, consisting of alpha-1 (CACNA1), alpha-2 (CACNA2D), beta (CACNB) and delta (CACNA2D) subunits in a 1:1:1:1 ratio. May be proteolytically processed into subunits alpha-2-2 and delta-2 that are disulfide-linked. It is however unclear whether such cleavage really takes place in vivo and has a functional role. In terms of tissue distribution, predominantly present in cerebellar cortex. Present in various lung tumor cell lines, while it is absent in normal lung (at protein level). Highly expressed in heart, lung, testis, pancreas and skeletal muscle. Also expressed in kidney, liver, placenta and brain.

The protein resides in the membrane. Functionally, the alpha-2/delta subunit of voltage-dependent calcium channels regulates calcium current density and activation/inactivation kinetics of the calcium channel. Acts as a regulatory subunit for P/Q-type calcium channel (CACNA1A), N-type (CACNA1B), L-type (CACNA1C OR CACNA1D) and possibly T-type (CACNA1G). Overexpression induces apoptosis. This Homo sapiens (Human) protein is Voltage-dependent calcium channel subunit alpha-2/delta-2 (CACNA2D2).